Reading from the N-terminus, the 133-residue chain is p53 and DNA damage-regulated protein 1 (133 aa).

This sequence belongs to the prefoldin subunit beta family. Component of the PAQosome complex which is responsible for the biogenesis of several protein complexes and which consists of R2TP complex members RUVBL1, RUVBL2, RPAP3 and PIH1D1, URI complex members PFDN2, PFDN6, PDRG1, UXT and URI1 as well as ASDURF, POLR2E and DNAAF10/WDR92.

The protein resides in the cytoplasm. May play a role in chaperone-mediated protein folding. The chain is p53 and DNA damage-regulated protein 1 (Pdrg1) from Rattus norvegicus (Rat).